Here is a 398-residue protein sequence, read N- to C-terminus: Enoyl-[acyl-carrier-protein] reductase [NADH] (398 aa).

NAD(+)-binding positions include 48–53, 74–75, 111–112, and 139–140; these read GSSTGY, FE, DA, and LA. Tyr-225 contacts substrate. The active-site Proton donor is the Tyr-235. Residues Lys-244 and 273–275 each bind NAD(+); that span reads VVT.

It belongs to the TER reductase family. As to quaternary structure, monomer.

The catalysed reaction is a 2,3-saturated acyl-[ACP] + NAD(+) = a (2E)-enoyl-[ACP] + NADH + H(+). It functions in the pathway lipid metabolism; fatty acid biosynthesis. Involved in the final reduction of the elongation cycle of fatty acid synthesis (FAS II). Catalyzes the reduction of a carbon-carbon double bond in an enoyl moiety that is covalently linked to an acyl carrier protein (ACP). In Pseudomonas paraeruginosa (strain DSM 24068 / PA7) (Pseudomonas aeruginosa (strain PA7)), this protein is Enoyl-[acyl-carrier-protein] reductase [NADH].